A 75-amino-acid chain; its full sequence is Disintegrin CTF-II (75 aa).

The Disintegrin domain occupies 1–75 (ELLEEGEDCY…SDDCPRWNDL (75 aa)). 6 disulfides stabilise this stretch: Cys9/Cys24, Cys11/Cys19, Cys18/Cys41, Cys32/Cys38, Cys37/Cys62, and Cys50/Cys69. Residues 54-56 (RGD) carry the Cell attachment site motif.

Belongs to the venom metalloproteinase (M12B) family. P-II subfamily. P-IIa sub-subfamily. In terms of assembly, monomer (disintegrin). In terms of tissue distribution, expressed by the venom gland.

The protein localises to the secreted. Functionally, inhibits fibrinogen interaction with platelet receptors, and inhibits aggregation induced by ADP, thrombin, collagen and platelet-activating factor. Acts by binding to the alpha-IIb/beta-3 (ITGA2B/ITGB3) on the platelet surface. The polypeptide is Disintegrin CTF-II (Protobothrops flavoviridis (Habu)).